We begin with the raw amino-acid sequence, 473 residues long: MTNIEQDRWSRVKGRLRSSVGEDVYSSWFARMDLESVQPESVHLSVPTRFLKSWIQTHYSDRVLSCWQAEMPQVHRVDLTVRTAMRCAAPAKDAPAHAEPRRDDGRPAPELRATAIAPVSATHEALGGSPLDPRLTFGSFVIGRSNTLAHAAARQVAEGRRGDPVMFNPLYIHSGVGLGKTHLLQAVTWAGNSGTERKVLYLTAEKFMYGFVAALKSQTALAFKEALRGIDVLVIDDLQFLQGKTTQAEFCHTLNALIDAGRQVVIAADRPPSDLESLDERVRSRLAGGLVVEMASLGEDLRLGILKSRVTAARAHHASFDVPLPVLEYLARTITHNGRDLEGAINRLLAHSKLNAQPVTLEMAEREIRDLVRPQEPKRIKIEDIQRVVARQYNVSRSDLLSSRRTANVVRPRQVAMYLAKTLTLRSLPEIGRRFGGRDHTTVLHAVRKIEGLVAKDTALSDEVELLKRQLQE.

The domain I, interacts with DnaA modulators stretch occupies residues 1-73 (MTNIEQDRWS…LSCWQAEMPQ (73 aa)). A domain II region spans residues 73-129 (QVHRVDLTVRTAMRCAAPAKDAPAHAEPRRDDGRPAPELRATAIAPVSATHEALGGS). Residues 130–352 (PLDPRLTFGS…GAINRLLAHS (223 aa)) are domain III, AAA+ region. ATP contacts are provided by Gly177, Gly179, Lys180, and Thr181. Positions 353–473 (KLNAQPVTLE…VELLKRQLQE (121 aa)) are domain IV, binds dsDNA.

This sequence belongs to the DnaA family. Oligomerizes as a right-handed, spiral filament on DNA at oriC.

The protein localises to the cytoplasm. Its function is as follows. Plays an essential role in the initiation and regulation of chromosomal replication. ATP-DnaA binds to the origin of replication (oriC) to initiate formation of the DNA replication initiation complex once per cell cycle. Binds the DnaA box (a 9 base pair repeat at the origin) and separates the double-stranded (ds)DNA. Forms a right-handed helical filament on oriC DNA; dsDNA binds to the exterior of the filament while single-stranded (ss)DNA is stabiized in the filament's interior. The ATP-DnaA-oriC complex binds and stabilizes one strand of the AT-rich DNA unwinding element (DUE), permitting loading of DNA polymerase. After initiation quickly degrades to an ADP-DnaA complex that is not apt for DNA replication. Binds acidic phospholipids. This chain is Chromosomal replication initiator protein DnaA, found in Rhodopseudomonas palustris (strain BisB18).